A 390-amino-acid polypeptide reads, in one-letter code: Altered inheritance of mitochondria protein 6 (390 aa).

Positions 1–26 (MLGLKGCLTILIGYVIAVCALFSSRG) are cleaved as a signal peptide.

Belongs to the AIM6 family.

In Saccharomyces cerevisiae (strain YJM789) (Baker's yeast), this protein is Altered inheritance of mitochondria protein 6 (AIM6).